A 603-amino-acid chain; its full sequence is Serine palmitoyltransferase 2 (603 aa).

The chain crosses the membrane as a helical span at residues 90-107; it reads YYYVVATYLTYLVLIIIG. At lysine 398 the chain carries N6-(pyridoxal phosphate)lysine.

This sequence belongs to the class-II pyridoxal-phosphate-dependent aminotransferase family. As to quaternary structure, lcb1 and lcb2 encode essential subunits of the enzyme and form a heterodimer. Pyridoxal 5'-phosphate is required as a cofactor.

Its subcellular location is the cytoplasm. The protein resides in the endoplasmic reticulum. The protein localises to the membrane. The enzyme catalyses L-serine + hexadecanoyl-CoA + H(+) = 3-oxosphinganine + CO2 + CoA. It participates in lipid metabolism; sphingolipid metabolism. Functionally, catalytic subunit of serine palmitoyltransferase (SPT), which catalyzes the committed step in the synthesis of sphingolipids, the condensation of serine with palmitoyl CoA to form the long chain base 3-ketosphinganine. This Schizosaccharomyces pombe (strain 972 / ATCC 24843) (Fission yeast) protein is Serine palmitoyltransferase 2 (lcb2).